Consider the following 459-residue polypeptide: Serine protease HTRA1 (459 aa).

An N-terminal signal peptide occupies residues 1-18 (MTMLWLAVLLTCGAPAAL). The 71-residue stretch at 22-92 (SGVGCPARCD…NGGVTRCQCP (71 aa)) folds into the IGFBP N-terminal domain. Intrachain disulfides connect cysteine 26-cysteine 51, cysteine 30-cysteine 53, cysteine 35-cysteine 54, cysteine 42-cysteine 57, cysteine 65-cysteine 80, cysteine 74-cysteine 89, cysteine 91-cysteine 109, and cysteine 98-cysteine 134. Residues 74 to 136 (CASGLRCVRN…IPIQRGDCQQ (63 aa)) enclose the Kazal-like domain. The serine protease stretch occupies residues 183–343 (GSGFIVSEDG…IPSDKIRKFM (161 aa)). Active-site charge relay system residues include histidine 199, aspartate 229, and serine 307. The region spanning 344-446 (AESHNRQSTG…LQMVIRRGNE (103 aa)) is the PDZ domain.

It belongs to the peptidase S1C family. Forms homotrimers. In the presence of substrate, may form higher-order multimers in a PDZ-independent manner.

The protein resides in the cell membrane. It is found in the secreted. Its subcellular location is the cytoplasm. The protein localises to the cytosol. In terms of biological role, serine protease with a variety of targets, including extracellular matrix proteins and proteoglycans such as biglycan, syndecan-4 and glypican-4. Through cleavage of proteoglycans, may release soluble FGF-glycosaminoglycan complexes that promote the range and intensity of FGF signals in the extracellular space. Consequently, facilitates inductive processes in the developing embryo, such as posteriorization, mesoderm induction and neuronal differentiation. Regulates the availability of insulin-like growth factors (IGFs) by cleaving IGF-binding proteins. Inhibits signaling mediated by TGF-beta family members. Consequently, may regulate many physiological processes. Intracellularly, degrades TSC2, leading to the activation of TSC2 downstream targets. The sequence is that of Serine protease HTRA1 (htra1) from Xenopus laevis (African clawed frog).